A 248-amino-acid chain; its full sequence is MIWFWSTLLVTAIAVLSTANESSSGQEKLAVESILFVFAHPDDESMFFGPTIDYLGNQHSTRVHVLCLSNGNADGLGSVREKELVVAASKYQIDKTNVHVVSDPQLQDGMQAKWDPTDVAKHISQIIERYNIKTLITFDNKGISGHPNHIACYEGAMKIVKATPQVQVFVLESVNIFRKYISYLDTIPTLVQSQAGRNDTIIIHADRKSTQRIRDAMVRGHKSQMVWFRYGWIYLSKYMSNNVLKRAT.

At 1–7 the chain is on the lumenal side; sequence MIWFWST. The chain crosses the membrane as a helical span at residues 8–24; it reads LLVTAIAVLSTANESSS. Residues 25–248 lie on the Cytoplasmic side of the membrane; it reads GQEKLAVESI…MSNNVLKRAT (224 aa).

This sequence belongs to the PIGL family.

Its subcellular location is the endoplasmic reticulum membrane. The enzyme catalyses a 6-(N-acetyl-alpha-D-glucosaminyl)-1-(1,2-diacyl-sn-glycero-3-phospho)-1D-myo-inositol + H2O = a 6-(alpha-D-glucosaminyl)-1-(1,2-diacyl-sn-glycero-3-phospho)-1D-myo-inositol + acetate. It functions in the pathway glycolipid biosynthesis; glycosylphosphatidylinositol-anchor biosynthesis. In terms of biological role, involved in the second step of GPI biosynthesis. De-N-acetylation of N-acetylglucosaminyl-phosphatidylinositol. The sequence is that of Probable N-acetylglucosaminyl-phosphatidylinositol de-N-acetylase (gpi12) from Schizosaccharomyces pombe (strain 972 / ATCC 24843) (Fission yeast).